We begin with the raw amino-acid sequence, 646 residues long: Stage V sporulation protein D (646 aa).

Ser294 serves as the catalytic Acyl-ester intermediate. The region spanning 580 to 638 is the PASTA domain; sequence DTKTIEVPNVVGMSVSDLESLLVNLNVDASGKGSKIVKQSPAAGTKVKEGSKIRVYLTE.

It belongs to the transpeptidase family.

It localises to the cell membrane. The enzyme catalyses Preferential cleavage: (Ac)2-L-Lys-D-Ala-|-D-Ala. Also transpeptidation of peptidyl-alanyl moieties that are N-acyl substituents of D-alanine.. It participates in cell wall biogenesis; peptidoglycan biosynthesis. Penicillin-binding protein with an unknown catalytic activity. May have a specialized role in the morphogenesis of spore cortex, which is a modified form of peptidoglycan. Spore cortex formation is determined primarily by the mother cell. This is Stage V sporulation protein D (spoVD) from Bacillus subtilis (strain 168).